The primary structure comprises 489 residues: N-succinylglutamate 5-semialdehyde dehydrogenase (489 aa).

An NAD(+)-binding site is contributed by 223–228 (GSSNTG). Active-site residues include E246 and C280.

This sequence belongs to the aldehyde dehydrogenase family. AstD subfamily.

The catalysed reaction is N-succinyl-L-glutamate 5-semialdehyde + NAD(+) + H2O = N-succinyl-L-glutamate + NADH + 2 H(+). Its pathway is amino-acid degradation; L-arginine degradation via AST pathway; L-glutamate and succinate from L-arginine: step 4/5. Functionally, catalyzes the NAD-dependent reduction of succinylglutamate semialdehyde into succinylglutamate. The chain is N-succinylglutamate 5-semialdehyde dehydrogenase from Idiomarina loihiensis (strain ATCC BAA-735 / DSM 15497 / L2-TR).